The following is a 153-amino-acid chain: Insulin-like growth factor 1 (153 aa).

A b region spans residues 49–77 (GPETLCGAELVDALQFVCGPRGFYFNKPT). Disulfide bonds link Cys54–Cys96, Cys66–Cys109, and Cys95–Cys100. Residues 78–89 (GYGSSIRRAPQT) are c. Residues 90–110 (GIVDECCFRSCDLRRLEMYCA) form an a region. The tract at residues 111 to 118 (PLKPTKSA) is d. A propeptide spans 119 to 153 (RSIRAQRHTDMPKTQKEVHLKNTSRGSAGNKTYRM) (e peptide). The segment at 119 to 153 (RSIRAQRHTDMPKTQKEVHLKNTSRGSAGNKTYRM) is disordered. The span at 125–138 (RHTDMPKTQKEVHL) shows a compositional bias: basic and acidic residues. A compositionally biased stretch (polar residues) spans 139–153 (KNTSRGSAGNKTYRM).

This sequence belongs to the insulin family. As to quaternary structure, forms a ternary complex with IGFR1 and ITGAV:ITGB3. Forms a ternary complex with IGFR1 and ITGA6:ITGB4. Forms a ternary complex with IGFBP3 and ALS.

The protein resides in the secreted. In terms of biological role, the insulin-like growth factors, isolated from plasma, are structurally and functionally related to insulin but have a much higher growth-promoting activity. May be a physiological regulator of [1-14C]-2-deoxy-D-glucose (2DG) transport and glycogen synthesis in osteoblasts. Stimulates glucose transport in bone-derived osteoblastic (PyMS) cells and is effective at much lower concentrations than insulin, not only regarding glycogen and DNA synthesis but also with regard to enhancing glucose uptake. May play a role in synapse maturation. Ca(2+)-dependent exocytosis of IGF1 is required for sensory perception of smell in the olfactory bulb. Acts as a ligand for IGF1R. Binds to the alpha subunit of IGF1R, leading to the activation of the intrinsic tyrosine kinase activity which autophosphorylates tyrosine residues in the beta subunit thus initiating a cascade of down-stream signaling events leading to activation of the PI3K-AKT/PKB and the Ras-MAPK pathways. Binds to integrins ITGAV:ITGB3 and ITGA6:ITGB4. Its binding to integrins and subsequent ternary complex formation with integrins and IGFR1 are essential for IGF1 signaling. Induces the phosphorylation and activation of IGFR1, MAPK3/ERK1, MAPK1/ERK2 and AKT1. As part of the MAPK/ERK signaling pathway, acts as a negative regulator of apoptosis in cardiomyocytes via promotion of STUB1/CHIP-mediated ubiquitination and degradation of ICER-type isoforms of CREM. The chain is Insulin-like growth factor 1 from Rattus norvegicus (Rat).